The chain runs to 429 residues: Ribosomal RNA small subunit methyltransferase B (429 aa).

S-adenosyl-L-methionine contacts are provided by residues 254-260, aspartate 277, aspartate 303, and aspartate 322; that span reads CAAPGGK. Cysteine 375 acts as the Nucleophile in catalysis.

The protein belongs to the class I-like SAM-binding methyltransferase superfamily. RsmB/NOP family.

It is found in the cytoplasm. The enzyme catalyses cytidine(967) in 16S rRNA + S-adenosyl-L-methionine = 5-methylcytidine(967) in 16S rRNA + S-adenosyl-L-homocysteine + H(+). In terms of biological role, specifically methylates the cytosine at position 967 (m5C967) of 16S rRNA. The chain is Ribosomal RNA small subunit methyltransferase B from Pectobacterium atrosepticum (strain SCRI 1043 / ATCC BAA-672) (Erwinia carotovora subsp. atroseptica).